The sequence spans 357 residues: 5-hydroxytryptamine receptor 5A (357 aa).

The Extracellular portion of the chain corresponds to 1-36 (MDLPINLTSFSLSTPSTLEPNRSLDTEALRTSQSFL). Residues N6 and N21 are each glycosylated (N-linked (GlcNAc...) asparagine). Residues 37-63 (SAFRVLVLTLLGFLAAATFTWNLLVLA) form a helical membrane-spanning segment. Residues 64–76 (TILRVRTFHRVPH) are Cytoplasmic-facing. Residues 77 to 103 (NLVASMAISDVLVAVLVMPLSLVHELS) traverse the membrane as a helical segment. Residues 104–114 (GRRWQLGRRLC) lie on the Extracellular side of the membrane. Cysteines 114 and 192 form a disulfide. Residues 115–137 (QLWIACDVLCCTASIWNVTAIAL) traverse the membrane as a helical segment. D121 is a serotonin binding site. Topologically, residues 138–155 (DRYWSITRHLEYTLRARK) are cytoplasmic. A helical transmembrane segment spans residues 156 to 176 (RVSNVMILLTWALSAVISLAP). The Extracellular segment spans residues 177–198 (LLFGWGETYSELSEECQVSREP). A helical membrane pass occupies residues 199–220 (SYTVFSTVGAFYLPLCVVLFVY). The Cytoplasmic portion of the chain corresponds to 221–287 (WKIYKAAKFR…QKEQRAALMV (67 aa)). A helical transmembrane segment spans residues 288–312 (GILIGVFVLCWFPFFVTELISPLCS). The Extracellular portion of the chain corresponds to 313-314 (WD). Residues 315-339 (IPALWKSIFLWLGYSNSFFNPLIYT) form a helical membrane-spanning segment. Over 340–357 (AFNRSYSSAFKVFFSKQQ) the chain is Cytoplasmic.

Belongs to the G-protein coupled receptor 1 family. As to expression, central nervous system.

The protein localises to the cell membrane. G-protein coupled receptor for 5-hydroxytryptamine (serotonin), a biogenic hormone that functions as a neurotransmitter, a hormone and a mitogen. Also functions as a receptor for ergot alkaloid derivatives and other psychoactive substances. Ligand binding causes a conformation change that triggers signaling via guanine nucleotide-binding proteins (G proteins) and modulates the activity of downstream effectors. Htr5a is coupled to G(i)/G(o) G alpha proteins and mediates inhibitory neurotransmission: signaling inhibits adenylate cyclase activity and activates a phosphatidylinositol-calcium second messenger system that regulates the release of Ca(2+) ions from intracellular stores. In Rattus norvegicus (Rat), this protein is 5-hydroxytryptamine receptor 5A.